Here is a 416-residue protein sequence, read N- to C-terminus: Phosphoglycerate kinase (416 aa).

Substrate is bound by residues 28 to 30, R44, 65 to 68, R122, and R162; these read DMN and HQSR. Residues E337 and 362-365 each bind ATP; that span reads GGHI.

This sequence belongs to the phosphoglycerate kinase family. As to quaternary structure, monomer.

The protein resides in the cytoplasm. It catalyses the reaction (2R)-3-phosphoglycerate + ATP = (2R)-3-phospho-glyceroyl phosphate + ADP. The protein operates within carbohydrate degradation; glycolysis; pyruvate from D-glyceraldehyde 3-phosphate: step 2/5. The protein is Phosphoglycerate kinase of Methanosarcina mazei (strain ATCC BAA-159 / DSM 3647 / Goe1 / Go1 / JCM 11833 / OCM 88) (Methanosarcina frisia).